A 623-amino-acid chain; its full sequence is Chaperone protein dnaK (623 aa).

The segment at 598 to 623 (TPDAGAEGGAAPSQDDAIETDFSTEK) is disordered.

The protein belongs to the heat shock protein 70 family.

The protein localises to the plastid. It localises to the chloroplast. Acts as a chaperone. This chain is Chaperone protein dnaK, found in Emiliania huxleyi (Coccolithophore).